We begin with the raw amino-acid sequence, 512 residues long: ATP synthase subunit alpha, chloroplastic (512 aa).

ATP is bound at residue 170–177 (GDRQTGKT).

This sequence belongs to the ATPase alpha/beta chains family. As to quaternary structure, F-type ATPases have 2 components, CF(1) - the catalytic core - and CF(0) - the membrane proton channel. CF(1) has five subunits: alpha(3), beta(3), gamma(1), delta(1), epsilon(1). CF(0) has four main subunits: a, b, b' and c.

It is found in the plastid. Its subcellular location is the chloroplast thylakoid membrane. The catalysed reaction is ATP + H2O + 4 H(+)(in) = ADP + phosphate + 5 H(+)(out). Functionally, produces ATP from ADP in the presence of a proton gradient across the membrane. The alpha chain is a regulatory subunit. The chain is ATP synthase subunit alpha, chloroplastic from Chaetosphaeridium globosum (Charophycean green alga).